A 438-amino-acid polypeptide reads, in one-letter code: Anaerobic glycerol-3-phosphate dehydrogenase subunit B (438 aa).

It belongs to the anaerobic G-3-P dehydrogenase subunit B family. Composed of a catalytic GlpA/B dimer and of membrane bound GlpC. It depends on FMN as a cofactor.

It catalyses the reaction a quinone + sn-glycerol 3-phosphate = dihydroxyacetone phosphate + a quinol. It participates in polyol metabolism; glycerol degradation via glycerol kinase pathway; glycerone phosphate from sn-glycerol 3-phosphate (anaerobic route): step 1/1. Its function is as follows. Conversion of glycerol 3-phosphate to dihydroxyacetone. Uses fumarate or nitrate as electron acceptor. This chain is Anaerobic glycerol-3-phosphate dehydrogenase subunit B, found in Vibrio vulnificus (strain YJ016).